A 276-amino-acid polypeptide reads, in one-letter code: Large ribosomal subunit protein uL2 (276 aa).

Residues 223-276 (GVAMNPVDHPHGGGEGRGKGHHPTSPWGLPTKGYKTRRGKRPSDKFIVRRRNEV) form a disordered region. Basic and acidic residues-rich tracts occupy residues 230–240 (DHPHGGGEGRG) and 263–276 (RPSD…RNEV).

The protein belongs to the universal ribosomal protein uL2 family. Part of the 50S ribosomal subunit. Forms a bridge to the 30S subunit in the 70S ribosome.

Functionally, one of the primary rRNA binding proteins. Required for association of the 30S and 50S subunits to form the 70S ribosome, for tRNA binding and peptide bond formation. It has been suggested to have peptidyltransferase activity; this is somewhat controversial. Makes several contacts with the 16S rRNA in the 70S ribosome. The sequence is that of Large ribosomal subunit protein uL2 from Thermotoga maritima (strain ATCC 43589 / DSM 3109 / JCM 10099 / NBRC 100826 / MSB8).